Here is a 183-residue protein sequence, read N- to C-terminus: ATP-dependent protease subunit HslV (183 aa).

The active site involves Thr-13. Residues Gly-168, Cys-171, and Thr-174 each coordinate Na(+).

This sequence belongs to the peptidase T1B family. HslV subfamily. In terms of assembly, a double ring-shaped homohexamer of HslV is capped on each side by a ring-shaped HslU homohexamer. The assembly of the HslU/HslV complex is dependent on binding of ATP.

It localises to the cytoplasm. It carries out the reaction ATP-dependent cleavage of peptide bonds with broad specificity.. Allosterically activated by HslU binding. In terms of biological role, protease subunit of a proteasome-like degradation complex believed to be a general protein degrading machinery. The sequence is that of ATP-dependent protease subunit HslV from Xanthomonas oryzae pv. oryzae (strain MAFF 311018).